Here is a 56-residue protein sequence, read N- to C-terminus: uncharacterized protein (56 aa).

2 helical membrane passes run 6 to 26 (VILL…LLNG) and 29 to 49 (VDFL…FVVV).

The protein resides in the cell membrane. This is an uncharacterized protein from Bacillus subtilis (strain 168).